The primary structure comprises 282 residues: Pantothenate synthetase (282 aa).

Position 30–37 (30–37) interacts with ATP; the sequence is MGYLHEGH. H37 (proton donor) is an active-site residue. Position 61 (Q61) interacts with (R)-pantoate. Q61 provides a ligand contact to beta-alanine. 147 to 150 lines the ATP pocket; it reads GMKD. Q153 provides a ligand contact to (R)-pantoate. ATP-binding positions include V176 and 184–187; that span reads KSSR.

The protein belongs to the pantothenate synthetase family. As to quaternary structure, homodimer.

It localises to the cytoplasm. It carries out the reaction (R)-pantoate + beta-alanine + ATP = (R)-pantothenate + AMP + diphosphate + H(+). It functions in the pathway cofactor biosynthesis; (R)-pantothenate biosynthesis; (R)-pantothenate from (R)-pantoate and beta-alanine: step 1/1. Its function is as follows. Catalyzes the condensation of pantoate with beta-alanine in an ATP-dependent reaction via a pantoyl-adenylate intermediate. This Bacillus cereus (strain G9842) protein is Pantothenate synthetase.